A 105-amino-acid chain; its full sequence is MATLQQQKIRIRLKAFDRRLLDTSCEKIVDTANRTNATAIGPIPLPTKRKIYCVLRSPHVDKDSREHFETRTHRRIIDIYQPSSKTIDALMKLDLPAGVDIEVKL.

It belongs to the universal ribosomal protein uS10 family. In terms of assembly, part of the 30S ribosomal subunit.

Its function is as follows. Involved in the binding of tRNA to the ribosomes. The sequence is that of Small ribosomal subunit protein uS10 from Picosynechococcus sp. (strain ATCC 27264 / PCC 7002 / PR-6) (Agmenellum quadruplicatum).